The chain runs to 726 residues: Catalase-peroxidase (726 aa).

The segment covering 1–12 has biased composition (polar residues); the sequence is MSTPSDQHNTLS. The disordered stretch occupies residues 1-34; that stretch reads MSTPSDQHNTLSAGKCPFHQGNSNQTAGGGTSSR. The tryptophyl-tyrosyl-methioninium (Trp-Tyr) (with M-252) cross-link spans 105–226; it reads WHSAGTYRSA…LGATEMGLIY (122 aa). The active-site Proton acceptor is the H106. The segment at residues 226-252 is a cross-link (tryptophyl-tyrosyl-methioninium (Tyr-Met) (with W-105)); the sequence is YVNPEGPNHSGDPASAAPAIRATFGNM. Residue H267 participates in heme b binding.

Belongs to the peroxidase family. Peroxidase/catalase subfamily. Homodimer or homotetramer. Requires heme b as cofactor. In terms of processing, formation of the three residue Trp-Tyr-Met cross-link is important for the catalase, but not the peroxidase activity of the enzyme.

It carries out the reaction H2O2 + AH2 = A + 2 H2O. It catalyses the reaction 2 H2O2 = O2 + 2 H2O. Its function is as follows. Bifunctional enzyme with both catalase and broad-spectrum peroxidase activity. The polypeptide is Catalase-peroxidase (Cronobacter sakazakii (strain ATCC BAA-894) (Enterobacter sakazakii)).